The chain runs to 656 residues: RNA-binding protein EWS (656 aa).

Positions 1–285 (MASTDYSTYS…GVYGQESGGF (285 aa)) are EAD (Gln/Pro/Thr-rich). A run of 31 repeats spans residues 8–16 (TYSQAAAQQ), 17–27 (GYSAYTAQPTQ), 28–34 (GYAQTTQ), 35–42 (AYGQQSYG), 43–50 (TYGQPTDV), 51–59 (SYTQAQTTA), 60–68 (TYGQTAYAT), 69–75 (SYGQPPT), 76–84 (GYTTPTAPQ), 85–91 (AYSQPVQ), 92–110 (GYGT…TTQA), 111–116 (SYAAQS), 117–125 (AYGTQPAYP), 126–156 (AYGQ…SSTG), 157–163 (GYNQPSL), 164–170 (GYGQSNY), 171–177 (SYPQVPG), 178–188 (SYPMQPVTAPP), 189–193 (SYPPT), 194–201 (SYSSTQPT), 202–206 (SYDQS), 207–212 (SYSQQN), 213–218 (TYGQPS), 219–224 (SYGQQS), 225–230 (SYGQQS), 231–238 (SYGQQPPT), 239–245 (SYPPQTG), 246–252 (SYSQAPS), 253–259 (QYSQQSS), 260–276 (SYGQ…SSMG), and 277–285 (VYGQESGGF). A 31 X approximate tandem repeats region spans residues 8 to 285 (TYSQAAAQQG…GVYGQESGGF (278 aa)). Positions 123 to 137 (AYPAYGQQPAATAPT) are enriched in low complexity. Residues 123–360 (AYPAYGQQPA…PVDPDEDSDN (238 aa)) are disordered. Residues 143–172 (NKPTETSQPQSSTGGYNQPSLGYGQSNYSY) show a composition bias toward polar residues. The segment covering 192–266 (PTSYSSTQPT…QSSSYGQQSS (75 aa)) has biased composition (low complexity). The IQ domain occupies 256–285 (QQSSSYGQQSSFRQDHPSSMGVYGQESGGF). Residue Ser266 is modified to Phosphoserine; by PKC. Residues Arg300, Arg302, Arg304, Arg309, Arg314, Arg317, and Arg321 each carry the asymmetric dimethylarginine modification. Gly residues predominate over residues 308–335 (DRGGMSRGGRGGGRGGMGSAGERGGFNK). Residues 336 to 350 (PGGPMDEGPDLDLGP) show a composition bias toward low complexity. The region spanning 361-447 (SAIYVQGLND…SKLKVSLARK (87 aa)) is the RRM domain. Lys439 is subject to N6-acetyllysine. 2 disordered regions span residues 448 to 525 (KPPM…WQCP) and 547 to 656 (KPEG…DRPY). Asymmetric dimethylarginine is present on residues Arg455 and Arg464. An Asymmetric dimethylarginine; alternate modification is found at Arg471. At Arg471 the chain carries Omega-N-methylarginine; alternate. A compositionally biased stretch (gly residues) spans 472–490 (GGPGGPGGPGGPMGRMGGR). Arg486 carries the omega-N-methylarginine modification. Arg490 carries the post-translational modification Asymmetric dimethylarginine; by PRMT8. Residues Arg494, Arg500, and Arg503 each carry the asymmetric dimethylarginine modification. Position 506 is an asymmetric dimethylarginine; alternate (Arg506). Position 506 is an omega-N-methylarginine; alternate (Arg506). The segment at 518-549 (RAGDWQCPNPGCGNQNFAWRTECNQCKAPKPE) adopts a RanBP2-type zinc-finger fold. Residues 551–560 (FLPPPFPPPG) show a composition bias toward pro residues. 2 positions are modified to asymmetric dimethylarginine: Arg563 and Arg565. Gly residues predominate over residues 566 to 591 (GGPGGMRGGRGGLMDRGGPGGMFRGG). Arg572 is modified (asymmetric dimethylarginine; alternate; by PRMT8). Arg572 carries the omega-N-methylarginine; alternate; by PRMT8 modification. Residues Arg575, Arg581, Arg589, and Arg592 each carry the asymmetric dimethylarginine modification. Residues 592–606 (RGGDRGGFRGGRGMD) are compositionally biased toward basic and acidic residues. Residue Arg596 is modified to Asymmetric dimethylarginine; alternate; by PRMT8. Residue Arg596 is modified to Omega-N-methylarginine; alternate; by PRMT8. Arg600 carries the post-translational modification Asymmetric dimethylarginine. Arg603 carries the asymmetric dimethylarginine; by PRMT8 modification. Asymmetric dimethylarginine; alternate; by PRMT8 is present on Arg607. Arg607 carries the omega-N-methylarginine; alternate; by PRMT8 modification. The span at 607-618 (RGGFGGGRRGGP) shows a compositional bias: gly residues. Arg615 carries the asymmetric dimethylarginine; alternate modification. Arg615 carries the post-translational modification Omega-N-methylarginine; alternate. An asymmetric dimethylarginine mark is found at Arg633 and Arg636. The Nuclear localization signal signature appears at 639 to 656 (PGKMDKGEHRQERRDRPY). The span at 641 to 656 (KMDKGEHRQERRDRPY) shows a compositional bias: basic and acidic residues.

The protein belongs to the RRM TET family. As to quaternary structure, binds POLR2C, SF1, calmodulin and RNA. Interacts with PTK2B/FAK2 and TDRD3. Binds calmodulin in the presence, but not in the absence, of calcium ion. Forms a complex with REC8, PRDM9, SYCP3 and SYCP1; complex formation is dependent of phosphorylated form of REC8 and requires PRDM9 bound to hotspot DNA; EWSR1 joins PRDM9 with the chromosomal axis through REC8. In terms of processing, phosphorylated; calmodulin-binding inhibits phosphorylation of Ser-266. Post-translationally, highly methylated on arginine residues. Methylation is mediated by PRMT1 and, at lower level by PRMT8. In terms of tissue distribution, ubiquitous.

It is found in the nucleus. The protein resides in the cytoplasm. The protein localises to the cell membrane. Binds to ssRNA containing the consensus sequence 5'-AGGUAA-3'. Might normally function as a transcriptional repressor. EWS-fusion-proteins (EFPS) may play a role in the tumorigenic process. They may disturb gene expression by mimicking, or interfering with the normal function of CTD-POLII within the transcription initiation complex. They may also contribute to an aberrant activation of the fusion protein target genes. This Homo sapiens (Human) protein is RNA-binding protein EWS (EWSR1).